The primary structure comprises 127 residues: Photosystem II extrinsic protein U (127 aa).

The first 31 residues, 1 to 31 (MSRLFRRLSTLLLCSLLVLGVWLTQPLSVQA), serve as a signal peptide directing secretion.

The protein belongs to the PsbU family. As to quaternary structure, PSII is composed of 1 copy each of membrane proteins PsbA, PsbB, PsbC, PsbD, PsbE, PsbF, PsbH, PsbI, PsbJ, PsbK, PsbL, PsbM, PsbT, PsbX, PsbY, PsbZ, Psb30/Ycf12, peripheral proteins PsbO, CyanoQ (PsbQ), PsbU, PsbV and a large number of cofactors. It forms dimeric complexes.

The protein resides in the cellular thylakoid membrane. Functionally, one of the extrinsic, lumenal subunits of photosystem II (PSII). PSII is a light-driven water plastoquinone oxidoreductase, using light energy to abstract electrons from H(2)O, generating a proton gradient subsequently used for ATP formation. The extrinsic proteins stabilize the structure of photosystem II oxygen-evolving complex (OEC), the ion environment of oxygen evolution and protect the OEC against heat-induced inactivation. This chain is Photosystem II extrinsic protein U, found in Synechococcus sp. (strain RCC307).